A 320-amino-acid polypeptide reads, in one-letter code: Cytochrome f (320 aa).

The signal sequence occupies residues M1–A35. Heme contacts are provided by Y36, C56, C59, and H60. The helical transmembrane segment at V286–K306 threads the bilayer.

It belongs to the cytochrome f family. The 4 large subunits of the cytochrome b6-f complex are cytochrome b6, subunit IV (17 kDa polypeptide, petD), cytochrome f and the Rieske protein, while the 4 small subunits are PetG, PetL, PetM and PetN. The complex functions as a dimer. The cofactor is heme.

It localises to the plastid. The protein localises to the chloroplast thylakoid membrane. In terms of biological role, component of the cytochrome b6-f complex, which mediates electron transfer between photosystem II (PSII) and photosystem I (PSI), cyclic electron flow around PSI, and state transitions. This Populus alba (White poplar) protein is Cytochrome f.